The sequence spans 554 residues: Chaperonin GroEL (554 aa).

ATP-binding positions include threonine 29 to proline 32, lysine 50, aspartate 86 to threonine 90, glycine 414, and aspartate 495.

Belongs to the chaperonin (HSP60) family. As to quaternary structure, forms a cylinder of 14 subunits composed of two heptameric rings stacked back-to-back. Interacts with the co-chaperonin GroES.

It is found in the cytoplasm. The enzyme catalyses ATP + H2O + a folded polypeptide = ADP + phosphate + an unfolded polypeptide.. Together with its co-chaperonin GroES, plays an essential role in assisting protein folding. The GroEL-GroES system forms a nano-cage that allows encapsulation of the non-native substrate proteins and provides a physical environment optimized to promote and accelerate protein folding. In Pelagibacter ubique (strain HTCC1062), this protein is Chaperonin GroEL.